Consider the following 110-residue polypeptide: UPF0213 protein DVU_3309 (110 aa).

Residues 8–83 form the GIY-YIG domain; that stretch reads EVWFVYLLRC…KRQPTDQKLA (76 aa).

The protein belongs to the UPF0213 family.

The sequence is that of UPF0213 protein DVU_3309 from Nitratidesulfovibrio vulgaris (strain ATCC 29579 / DSM 644 / CCUG 34227 / NCIMB 8303 / VKM B-1760 / Hildenborough) (Desulfovibrio vulgaris).